The primary structure comprises 642 residues: Threonine--tRNA ligase (642 aa).

The region spanning 1 to 61 is the TGS domain; the sequence is MPVITLPDGS…DTDSELSIIT (61 aa). Residues 243–534 form a catalytic region; the sequence is DHRKIGKQLD…LIEEYAGKFP (292 aa). The Zn(2+) site is built by Cys-334, His-385, and His-511.

The protein belongs to the class-II aminoacyl-tRNA synthetase family. As to quaternary structure, homodimer. It depends on Zn(2+) as a cofactor.

The protein resides in the cytoplasm. The catalysed reaction is tRNA(Thr) + L-threonine + ATP = L-threonyl-tRNA(Thr) + AMP + diphosphate + H(+). Functionally, catalyzes the attachment of threonine to tRNA(Thr) in a two-step reaction: L-threonine is first activated by ATP to form Thr-AMP and then transferred to the acceptor end of tRNA(Thr). Also edits incorrectly charged L-seryl-tRNA(Thr). This Shewanella woodyi (strain ATCC 51908 / MS32) protein is Threonine--tRNA ligase.